Reading from the N-terminus, the 976-residue chain is Synaptonemal complex protein 1 (976 aa).

Residues 101-111 (GLSRVYSKLYK) carry the Mediates head to head self-assembly of N-terminal ends motif. Residues 117 to 120 (KKWK) carry the Nuclear localization signal motif. The interval 206-362 (ETRQVYMDLN…CQLTEEKETQ (157 aa)) is interaction with SYCE3. Coiled-coil stretches lie at residues 211 to 316 (YMDL…SIEK), 391 to 439 (LRTE…LKKV), 499 to 685 (VKDL…VEKA), and 739 to 798 (EQEQ…KTQT). The interval 676-770 (ENLLEEVEKA…LSVKKQLEIE (95 aa)) is required for pH-induced assembly of C-terminal ends into antiparallel tetramers. The short motif at 679–682 (LEEV) is the Nuclear localization signal element. The tract at residues 784–976 (NTATLKEKKD…KLKEAEKLFV (193 aa)) is DNA-binding. The short motif at 880–883 (KKRK) is the Nuclear localization signal element.

In terms of assembly, structural component of synaptonemal complexes. Homotetramer that consists of an N-terminal four-helical bundle that bifurcates into two elongated C-terminal dimeric coiled coils. This tetrameric building block potentially self-assembles into a supramolecular zipper-like lattice to mediate meiotic chromosome synapsis. Self-assembly is likely initiated by local proton density at chromosome axis, which is predicted to trigger antiparallel back to back assembly of adjacent C-terminal ends into tetrameric structures that anchor to chromosomal DNA. Then the N-terminal ends are predicted to undergo cooperative antiparallel head to head assembly at the midline of synaptonemal complexes central element to form a zipper-like lattice between properly aligned homologous chromosomes. The nascent synapsis generated by SYCP1 is stabilized through interaction with central element proteins SYCE1 and SYCE2. Interacts (via tetrameric core) with SYCE3; the interaction remodels SYCP1 homotetramers to 2:1 heterotrimers with SYCE3. SYCP1/SYCE3 heterotrimers form lattice assemblies as part of the mature synaptonemal complex via both lateral and head-to-head interactions. Forms a complex with EWSR1, PRDM9, SYCP3 and REC8; complex formation is dependent of phosphorylated form of REC8 and requires PRDM9 bound to hotspot DNA; EWSR1 joins PRDM9 with the chromosomal axis through REC8. Interacts with SPO16. As to expression, testis.

It is found in the nucleus. It localises to the chromosome. Its subcellular location is the centromere. Major component of the transverse filaments of synaptonemal complexes, formed between homologous chromosomes during meiotic prophase. Required for normal assembly of the central element of the synaptonemal complexes. Required for normal centromere pairing during meiosis. Required for normal meiotic chromosome synapsis during oocyte and spermatocyte development and for normal male and female fertility. This is Synaptonemal complex protein 1 from Homo sapiens (Human).